A 327-amino-acid chain; its full sequence is Biotin synthase (327 aa).

Positions 48-278 constitute a Radical SAM core domain; the sequence is YCGDGVGLCM…DRHITVCGGR (231 aa). Positions 66, 70, and 73 each coordinate [4Fe-4S] cluster. [2Fe-2S] cluster contacts are provided by serine 143 and cysteine 203.

This sequence belongs to the radical SAM superfamily. Biotin synthase family. Homodimer. Requires [4Fe-4S] cluster as cofactor. [2Fe-2S] cluster serves as cofactor.

The catalysed reaction is (4R,5S)-dethiobiotin + (sulfur carrier)-SH + 2 reduced [2Fe-2S]-[ferredoxin] + 2 S-adenosyl-L-methionine = (sulfur carrier)-H + biotin + 2 5'-deoxyadenosine + 2 L-methionine + 2 oxidized [2Fe-2S]-[ferredoxin]. The protein operates within cofactor biosynthesis; biotin biosynthesis; biotin from 7,8-diaminononanoate: step 2/2. Catalyzes the conversion of dethiobiotin (DTB) to biotin by the insertion of a sulfur atom into dethiobiotin via a radical-based mechanism. In Syntrophotalea carbinolica (strain DSM 2380 / NBRC 103641 / GraBd1) (Pelobacter carbinolicus), this protein is Biotin synthase.